We begin with the raw amino-acid sequence, 256 residues long: Ubiquinone biosynthesis O-methyltransferase (256 aa).

S-adenosyl-L-methionine contacts are provided by R44, G80, D101, and M144.

The protein belongs to the methyltransferase superfamily. UbiG/COQ3 family.

It carries out the reaction a 3-demethylubiquinol + S-adenosyl-L-methionine = a ubiquinol + S-adenosyl-L-homocysteine + H(+). The catalysed reaction is a 3-(all-trans-polyprenyl)benzene-1,2-diol + S-adenosyl-L-methionine = a 2-methoxy-6-(all-trans-polyprenyl)phenol + S-adenosyl-L-homocysteine + H(+). It functions in the pathway cofactor biosynthesis; ubiquinone biosynthesis. In terms of biological role, O-methyltransferase that catalyzes the 2 O-methylation steps in the ubiquinone biosynthetic pathway. The protein is Ubiquinone biosynthesis O-methyltransferase of Methylocella silvestris (strain DSM 15510 / CIP 108128 / LMG 27833 / NCIMB 13906 / BL2).